We begin with the raw amino-acid sequence, 71 residues long: Small ribosomal subunit protein bS18 (71 aa).

It belongs to the bacterial ribosomal protein bS18 family. As to quaternary structure, part of the 30S ribosomal subunit. Forms a tight heterodimer with protein bS6.

Its function is as follows. Binds as a heterodimer with protein bS6 to the central domain of the 16S rRNA, where it helps stabilize the platform of the 30S subunit. This Dichelobacter nodosus (strain VCS1703A) protein is Small ribosomal subunit protein bS18.